The sequence spans 705 residues: Choline transporter-like protein 2 (705 aa).

Residues 1–31 lie on the Cytoplasmic side of the membrane; it reads MEDQRKYGAYGTPQKYDPTFKGPIYNRGCTD. Phosphothreonine is present on Thr-12. Residues 32–52 traverse the membrane as a helical segment; the sequence is VLCCVLLFLAIVGYVAVGLIA. The Extracellular segment spans residues 53 to 231; it reads WTHGDPRKVI…RIFEDYTVSW (179 aa). Asn-186 and Asn-199 each carry an N-linked (GlcNAc...) asparagine glycan. The helical transmembrane segment at 232–252 threads the bilayer; sequence YWIVIGLVIAMVLSLLFIILL. Topologically, residues 253–255 are cytoplasmic; that stretch reads RFL. Residues 256–276 form a helical membrane-spanning segment; that stretch reads AGIMVWVMIVLVILVLGYGIF. At 277–314 the chain is on the extracellular side; it reads HCYMEYARLRGEAGSDISVLDLGFQTDFRVYLHLRQTW. Residues 315 to 335 form a helical membrane-spanning segment; that stretch reads LAFMIILSILEVIIILLLIFL. At 336–363 the chain is on the cytoplasmic side; it reads RKRILIAIALIKEASRAVGYVMCSLLYP. A helical transmembrane segment spans residues 364-384; that stretch reads LVTFFLLCLCIAYWASTAVFL. At 385–455 the chain is on the extracellular side; the sequence is STSNEAVYKI…IFNAFMFFWL (71 aa). The N-linked (GlcNAc...) asparagine glycan is linked to Asn-414. Residues 456–478 form a helical membrane-spanning segment; that stretch reads ANFVLALGQVTLAGAFASYYWAL. Over 479 to 503 the chain is Cytoplasmic; it reads RKPDDMPAFPLFAAFGRALRYHTGS. Residues 504-524 traverse the membrane as a helical segment; it reads LAFGSLILAIVQIIRVILEYL. Residues 525-562 are Extracellular-facing; that stretch reads DQRLKAAENKFAKFLMTCLKCCFWCLEKFIKFLNRNAY. A helical transmembrane segment spans residues 563 to 583; that stretch reads IMIAIYGTNFCTSARNAFFLL. Residues 584 to 598 lie on the Cytoplasmic side of the membrane; that stretch reads MRNIIRVAVLDKVTD. Residues 599–619 traverse the membrane as a helical segment; the sequence is FLFLLGKLLIVGSVGILAFFF. Residues 620–637 are Extracellular-facing; that stretch reads FTHRIRIVQDTAPPLNYY. A helical transmembrane segment spans residues 638–658; the sequence is WVPILTVIVGSYLIAHGFFSV. Residues 659–705 are Cytoplasmic-facing; sequence YGMCVDTLFLCFLEDLERNNGSSERPYFMSSTLKKLLNKTNKKPVES.

Belongs to the CTL (choline transporter-like) family. As to quaternary structure, interacts with COCH. N-glycosylated; contains sialic acid. Not O-glycosylated. Expressed at high levels in lung, colon and in supporting cells of the inner ear (at protein level). Progressively lower levels in brain, tongue, liver and kidney (at protein level). In the tongue, strongly expressed in epithelial cells and in nerves within the musculature. Within the nerves, expression observed in the perineurial cells of the nerve sheath, in the Schwann cells and myelinated nerve fibers (at protein level). In the kidney, prominent expression in glomeruli in the lining of Bowman's capsule and on the mesangial cells adjacent to the vessels within the glomerulus (at protein level). Strongly expressed on the membranes of splenocytes (at protein level).

The protein localises to the cell membrane. It is found in the mitochondrion outer membrane. It carries out the reaction choline(out) + n H(+)(in) = choline(in) + n H(+)(out). The catalysed reaction is ethanolamine(out) + n H(+)(in) = ethanolamine(in) + n H(+)(out). Its function is as follows. Choline/H+ antiporter, mainly in mitochodria. Also acts as a low-affinity ethanolamine/H+ antiporter, regulating the supply of extracellular ethanolamine (Etn) for the CDP-Etn pathway, redistribute intracellular Etn and balance the CDP-Cho and CDP-Etn arms of the Kennedy pathway. This is Choline transporter-like protein 2 (SLC44A2) from Cavia porcellus (Guinea pig).